The following is a 228-amino-acid chain: Isoprenyl transferase (228 aa).

The active site involves D15. D15 is a binding site for Mg(2+). Residues 16–19, W20, R28, H32, and 60–62 contribute to the substrate site; these read GNGR and STE. The active-site Proton acceptor is N63. Substrate contacts are provided by residues W64, R66, R176, and 182–184; that span reads RLS. E195 contributes to the Mg(2+) binding site.

It belongs to the UPP synthase family. As to quaternary structure, homodimer. Mg(2+) is required as a cofactor.

Functionally, catalyzes the condensation of isopentenyl diphosphate (IPP) with allylic pyrophosphates generating different type of terpenoids. This Wolinella succinogenes (strain ATCC 29543 / DSM 1740 / CCUG 13145 / JCM 31913 / LMG 7466 / NCTC 11488 / FDC 602W) (Vibrio succinogenes) protein is Isoprenyl transferase.